The primary structure comprises 488 residues: 3-octaprenyl-4-hydroxybenzoate carboxy-lyase (488 aa).

Asparagine 172 contacts Mn(2+). Residues 175-177 (IYR), 189-191 (RWL), and 194-195 (RG) contribute to the prenylated FMN site. Glutamate 238 contacts Mn(2+). Aspartate 287 (proton donor) is an active-site residue.

Belongs to the UbiD family. Homohexamer. Requires prenylated FMN as cofactor. It depends on Mn(2+) as a cofactor.

The protein localises to the cell membrane. It catalyses the reaction a 4-hydroxy-3-(all-trans-polyprenyl)benzoate + H(+) = a 2-(all-trans-polyprenyl)phenol + CO2. It functions in the pathway cofactor biosynthesis; ubiquinone biosynthesis. Catalyzes the decarboxylation of 3-octaprenyl-4-hydroxy benzoate to 2-octaprenylphenol, an intermediate step in ubiquinone biosynthesis. This chain is 3-octaprenyl-4-hydroxybenzoate carboxy-lyase, found in Legionella pneumophila (strain Paris).